We begin with the raw amino-acid sequence, 268 residues long: Hydroxyethylthiazole kinase 2 (268 aa).

M42 contributes to the substrate binding site. ATP contacts are provided by K117 and T167. Position 194 (G194) interacts with substrate.

This sequence belongs to the Thz kinase family. Mg(2+) serves as cofactor.

The catalysed reaction is 5-(2-hydroxyethyl)-4-methylthiazole + ATP = 4-methyl-5-(2-phosphooxyethyl)-thiazole + ADP + H(+). It functions in the pathway cofactor biosynthesis; thiamine diphosphate biosynthesis; 4-methyl-5-(2-phosphoethyl)-thiazole from 5-(2-hydroxyethyl)-4-methylthiazole: step 1/1. Functionally, catalyzes the phosphorylation of the hydroxyl group of 4-methyl-5-beta-hydroxyethylthiazole (THZ). The sequence is that of Hydroxyethylthiazole kinase 2 from Streptococcus pneumoniae (strain CGSP14).